Consider the following 130-residue polypeptide: Zinc finger A20 and AN1 domain-containing stress-associated protein 10 (130 aa).

The A20-type zinc-finger motif lies at 4–38; that stretch reads ETEALPCEGGCGLYGTRVNNNLCSLCYKKSVLQHS. The Zn(2+) site is built by C10, C14, C26, C29, C71, C74, C85, C87, C92, H95, H101, and C103. The AN1-type zinc finger occupies 65 to 111; it reads PVKKRRCGICKRKVGMLGFKCRCGHMFCGSHRYPEEHSCPFDYKQSG.

Functionally, may be involved in environmental stress response. This is Zinc finger A20 and AN1 domain-containing stress-associated protein 10 (SAP10) from Arabidopsis thaliana (Mouse-ear cress).